Here is a 72-residue protein sequence, read N- to C-terminus: Large ribosomal subunit protein uL29 (72 aa).

The protein belongs to the universal ribosomal protein uL29 family.

This Thermus thermophilus (strain ATCC BAA-163 / DSM 7039 / HB27) protein is Large ribosomal subunit protein uL29.